A 117-amino-acid chain; its full sequence is Flagellar transcriptional regulator FlhD (117 aa).

The protein belongs to the FlhD family. In terms of assembly, homodimer; disulfide-linked. Forms a heterohexamer composed of two FlhC and four FlhD subunits. Each FlhC binds a FlhD dimer, forming a heterotrimer, and a hexamer assembles by dimerization of two heterotrimers.

It localises to the cytoplasm. In terms of biological role, functions in complex with FlhC as a master transcriptional regulator that regulates transcription of several flagellar and non-flagellar operons by binding to their promoter region. Activates expression of class 2 flagellar genes, including fliA, which is a flagellum-specific sigma factor that turns on the class 3 genes. Also regulates genes whose products function in a variety of physiological pathways. The protein is Flagellar transcriptional regulator FlhD of Photorhabdus laumondii subsp. laumondii (strain DSM 15139 / CIP 105565 / TT01) (Photorhabdus luminescens subsp. laumondii).